A 328-amino-acid polypeptide reads, in one-letter code: Naphthalene 1,2-dioxygenase/salicylate 5-hydroxylase systems, ferredoxin--NAD(P)(+), reductase component (328 aa).

The region spanning Met1–Asp89 is the 2Fe-2S ferredoxin-type domain. Cys35, Cys40, Cys43, and Cys73 together coordinate [2Fe-2S] cluster. In terms of domain architecture, FAD-binding FR-type spans Ala96 to Arg193.

This sequence belongs to the bacterial ring-hydroxylating dioxygenase ferredoxin reductase family. As to quaternary structure, ferredoxin reductase NagAa belongs to both the salicylate 5-hydroxylase (S5H) and the naphthalene 1,2-dioxygenase (NDO) multicomponent enzyme systems. The NDO multicomponent enzyme system is composed of an electron transfer component and a dioxygenase component (iron sulfur protein (ISP)). The electron transfer component is composed of a ferredoxin reductase (NagAa) and a ferredoxin (NagAb), and the dioxygenase component is formed by a large alpha subunit (NagAc) and a small beta subunit (NagAd). The S5H multicomponent enzyme system is composed of an electron transfer component and a monooxygenase component. The electron transfer component is comprised of a ferredoxin reductase (NagAa) and a ferredoxin (NagAb), and the monooxygenase component is formed by a large subunit (NagG) and a small subunit (NagH). The cofactor is [2Fe-2S] cluster. It depends on FAD as a cofactor.

It carries out the reaction 2 reduced [2Fe-2S]-[ferredoxin] + NAD(+) + H(+) = 2 oxidized [2Fe-2S]-[ferredoxin] + NADH. It catalyses the reaction 2 reduced [2Fe-2S]-[ferredoxin] + NADP(+) + H(+) = 2 oxidized [2Fe-2S]-[ferredoxin] + NADPH. The protein operates within aromatic compound metabolism; naphthalene degradation. In terms of biological role, component of two multicomponent enzyme systems which are involved in the catabolism of naphthalene. Plays a role as an electron transfer component for both salicylate 5-hydroxylase (S5H) and naphthalene 1,2-dioxygenase (NDO) systems, by transferring electrons from NAD(P)H to the oxygenase component via the ferredoxin NagAb. The electron transport chain from the two systems can use both NADH and NADPH as electron donors at approximately similar rates. The chain is Naphthalene 1,2-dioxygenase/salicylate 5-hydroxylase systems, ferredoxin--NAD(P)(+), reductase component from Ralstonia sp.